Consider the following 266-residue polypeptide: Undecaprenyl-diphosphatase (266 aa).

Transmembrane regions (helical) follow at residues 3–23, 41–61, 86–106, 108–128, 149–171, 184–204, 220–240, and 245–265; these read MSLL…FLPV, GTET…VVLY, VLVG…AIKA, LNTP…ILVI, FGVG…ATIM, AEYS…LALW, IGFV…LGVV, and FAPF…WLLA.

This sequence belongs to the UppP family.

The protein resides in the cell inner membrane. The catalysed reaction is di-trans,octa-cis-undecaprenyl diphosphate + H2O = di-trans,octa-cis-undecaprenyl phosphate + phosphate + H(+). Its function is as follows. Catalyzes the dephosphorylation of undecaprenyl diphosphate (UPP). Confers resistance to bacitracin. The protein is Undecaprenyl-diphosphatase of Rhizorhabdus wittichii (strain DSM 6014 / CCUG 31198 / JCM 15750 / NBRC 105917 / EY 4224 / RW1) (Sphingomonas wittichii).